A 636-amino-acid chain; its full sequence is Cysteine-rich receptor-like protein kinase 24 (636 aa).

An N-terminal signal peptide occupies residues 1–20 (MVKFLVIFWFVVISFSHVSA). 2 Gnk2-homologous domains span residues 21 to 124 (QVCL…NRSF) and 130 to 235 (MEIL…LYPF). The Extracellular portion of the chain corresponds to 21 to 254 (QVCLERSGFF…RQKDGKSIST (234 aa)). N-linked (GlcNAc...) asparagine glycans are attached at residues Asn33, Asn50, Asn98, Asn101, Asn121, Asn137, Asn145, and Asn197. A helical membrane pass occupies residues 255 to 275 (GAIVAIIVVPILLLALGVGLW). Residues 276–636 (KRRKAYKTKT…SVSVTCVSPR (361 aa)) lie on the Cytoplasmic side of the membrane. The 274-residue stretch at 312–585 (FHNVNKLGHG…TMSTVFHMLT (274 aa)) folds into the Protein kinase domain. ATP-binding positions include 318-326 (LGHGGFGEV) and Lys340. Asp437 (proton acceptor) is an active-site residue.

The protein belongs to the protein kinase superfamily. Ser/Thr protein kinase family. CRK subfamily.

It is found in the membrane. It carries out the reaction L-seryl-[protein] + ATP = O-phospho-L-seryl-[protein] + ADP + H(+). The catalysed reaction is L-threonyl-[protein] + ATP = O-phospho-L-threonyl-[protein] + ADP + H(+). The chain is Cysteine-rich receptor-like protein kinase 24 (CRK24) from Arabidopsis thaliana (Mouse-ear cress).